Reading from the N-terminus, the 661-residue chain is MPLPSRASSTPKISKACVPCRTRKIKCNAAVVGLPCGSCVSRECPDECVLSARKRRTVKGRNAETPRSRKNIPDTNGSVLSPRQQQLPTNVSRQATDSSHSDPVEESIHASHTGSSLRNDTPHSRDRRPPGQTQADLLYLNILQDTVNDTSAAQTDASDHQSNDEPDDSFNSQIHHWNPPPQLDDVDNEYLAKKKVFELPPPRFMENIVKAYFDYVHPFAPILNRTDFIQSYRSGSCCLFLLHAVAAAASLYVTHDVLIGCGYQDRSTAQASFFSKAKLFHDFHCQGDPLSMLQGSMILGAIILDHPSDRDFQYWFHNSVRRASKMGVQNACLRDDGSQKLYRRIWWVLHNRDIFHFFINTQNMRLLANAPPIRPLTEADWETEDMEQWSGILSPISQAQKVSLIAQCELAQIFGNVMSVVTSSTPSAEEIHKRILPLDAWRTSLPERMQLMASFANGEKYHLEALTTSYRFECIMCRLLRRGRWQMSDGGLREWAQQRFRSAIFELDTIVKRVMINNTIQKLPTTFITTITALLALHIESALDAAESSLIRSMARISVQHTMLALDQIRDTPAIKRALPAFEIVLSKNKLYPMSTSDTEQISTIQTIPQDQTLSDGQILQPPPTDMTLPQDDQSFLYGDFIGFDFLDRWQMEQLDFTGIY.

Residues 17-48 constitute a DNA-binding region (zn(2)-C6 fungal-type); it reads CVPCRTRKIKCNAAVVGLPCGSCVSRECPDEC. Disordered stretches follow at residues 56-132 and 151-184; these read RTVK…PPGQ and SAAQ…PQLD. The span at 73 to 98 shows a compositional bias: polar residues; that stretch reads PDTNGSVLSPRQQQLPTNVSRQATDS. The span at 99–109 shows a compositional bias: basic and acidic residues; that stretch reads SHSDPVEESIH. A compositionally biased stretch (polar residues) spans 110 to 119; the sequence is ASHTGSSLRN. Residues 120–129 are compositionally biased toward basic and acidic residues; sequence DTPHSRDRRP.

It localises to the nucleus. Functionally, transcription factor that is involved in the formation of the two Fusaric acid derivatives, dehydrofusaric acid and fusarinolic acid, serving as a detoxification mechanism. The protein is Fusaric acid cluster transcription factor FUB12 of Gibberella moniliformis (strain M3125 / FGSC 7600) (Maize ear and stalk rot fungus).